The following is a 478-amino-acid chain: Ubiquitin carboxyl-terminal hydrolase calypso (478 aa).

The UCH catalytic domain maps to 11-239 (GWLELESDPG…IRFNLMAVVP (229 aa)). The Nucleophile role is filled by C97. The active-site Proton donor is H176. The ULD domain maps to 400 to 428 (NYDEFICTFLSMLAHQGELGDLVSQHLIT). Residues 430–478 (RKPNMGSVQNSGSRGVVRNYNKKTTTNGSSPKTPSSKRRRGRTKYRKRK) are positively charged C-terminal tail required for binding nucleosomes. Over residues 432–442 (PNMGSVQNSGS) the composition is skewed to polar residues. The disordered stretch occupies residues 432–478 (PNMGSVQNSGSRGVVRNYNKKTTTNGSSPKTPSSKRRRGRTKYRKRK). The segment covering 464 to 478 (SSKRRRGRTKYRKRK) has biased composition (basic residues).

Belongs to the peptidase C12 family. BAP1 subfamily. In terms of assembly, catalytic component of the polycomb repressive deubiquitinase (PR-DUB) complex, at least composed of caly/calypso, Asx and sba (MBD5/6 homolog). The PR-DUB complex associates with nucleosomes to mediate deubiquitination of histone H2AK118ub1 substrates; the association requires the positively charged C-terminal tail of caly, probably due to direct binding of DNA. Interacts (via ULD domain) with Asx (via DEUBAD domain); the interaction produces a stable heterodimer with a composite binding site for ubiquitin. Homodimerizes (via coiled-coil hinge-region between the UCH and ULD domains) to mediate assembly of 2 copies of the caly-Asx heterodimer into a bisymmetric tetramer; dimerization enhances PR-DUB association with nucleosomes.

Its subcellular location is the nucleus. It carries out the reaction Thiol-dependent hydrolysis of ester, thioester, amide, peptide and isopeptide bonds formed by the C-terminal Gly of ubiquitin (a 76-residue protein attached to proteins as an intracellular targeting signal).. Functionally, catalytic component of the polycomb repressive deubiquitinase (PR-DUB) complex, a complex that specifically mediates deubiquitination of histone H2A monoubiquitinated at 'Lys-119' (H2AK118ub1). Mediates bisymmetric organization of the PR-DUB complex and is involved in association with nucleosomes to mediate deubiquitination. Does not deubiquitinate monoubiquitinated histone H2B. Required to maintain the transcriptionally repressive state of homeotic genes throughout development. The PR-DUB complex has weak or no activity toward 'Lys-48'- and 'Lys-63'-linked polyubiquitin chains. Polycomb group (PcG) protein. This chain is Ubiquitin carboxyl-terminal hydrolase calypso, found in Aedes aegypti (Yellowfever mosquito).